The following is a 412-amino-acid chain: Multifunctional CCA protein (412 aa).

ATP is bound by residues glycine 8 and arginine 11. CTP is bound by residues glycine 8 and arginine 11. The Mg(2+) site is built by aspartate 21 and aspartate 23. 3 residues coordinate ATP: arginine 91, arginine 137, and arginine 140. Arginine 91, arginine 137, and arginine 140 together coordinate CTP. Residues 228 to 329 form the HD domain; it reads TGIHTLMTLS…VKLFDSIDAW (102 aa).

Belongs to the tRNA nucleotidyltransferase/poly(A) polymerase family. Bacterial CCA-adding enzyme type 1 subfamily. Monomer. Can also form homodimers and oligomers. Requires Mg(2+) as cofactor. The cofactor is Ni(2+).

It carries out the reaction a tRNA precursor + 2 CTP + ATP = a tRNA with a 3' CCA end + 3 diphosphate. The catalysed reaction is a tRNA with a 3' CCA end + 2 CTP + ATP = a tRNA with a 3' CCACCA end + 3 diphosphate. Its function is as follows. Catalyzes the addition and repair of the essential 3'-terminal CCA sequence in tRNAs without using a nucleic acid template. Adds these three nucleotides in the order of C, C, and A to the tRNA nucleotide-73, using CTP and ATP as substrates and producing inorganic pyrophosphate. tRNA 3'-terminal CCA addition is required both for tRNA processing and repair. Also involved in tRNA surveillance by mediating tandem CCA addition to generate a CCACCA at the 3' terminus of unstable tRNAs. While stable tRNAs receive only 3'-terminal CCA, unstable tRNAs are marked with CCACCA and rapidly degraded. The chain is Multifunctional CCA protein from Escherichia coli O81 (strain ED1a).